The following is a 380-amino-acid chain: Glycogenin-2 (380 aa).

Residues Leu10, Tyr16, and Arg95 each coordinate UDP. UDP-alpha-D-glucose is bound by residues Leu10, Tyr16, Arg95, Lys104, Asp120, Ala121, Asp122, Asn158, Thr159, Asp185, Asp188, and Gln189. Positions 120, 121, and 122 each coordinate UDP. A Mn(2+)-binding site is contributed by Asp120. Asp122 is a Mn(2+) binding site. O-linked (Glc...) tyrosine glycans are attached at residues Tyr230 and Tyr232. The UDP site is built by His249, Gly252, and Lys255. Residue His249 coordinates Mn(2+). The UDP-alpha-D-glucose site is built by Gly252 and Lys255. Residues 331 to 355 (SVDRNASQKSTAEKHDIEKPTSKPQ) are disordered. Positions 341–351 (TAEKHDIEKPT) are enriched in basic and acidic residues. The O-linked (Glc...) tyrosine glycan is linked to Tyr367.

Belongs to the glycosyltransferase 8 family. Glycogenin subfamily. As to quaternary structure, interacts with glycogen synthase GSY2. The cofactor is Mn(2+).

The protein localises to the cytoplasm. Its subcellular location is the vacuole. It carries out the reaction L-tyrosyl-[glycogenin] + UDP-alpha-D-glucose = alpha-D-glucosyl-L-tyrosyl-[glycogenin] + UDP + H(+). The catalysed reaction is [1,4-alpha-D-glucosyl](n)-L-tyrosyl-[glycogenin] + UDP-alpha-D-glucose = [1,4-alpha-D-glucosyl](n+1)-L-tyrosyl-[glycogenin] + UDP + H(+). Its function is as follows. Self-glucosylating initiator of glycogen synthesis. It catalyzes the formation of a short alpha (1,4)-glucosyl chain covalently attached via a glucose 1-O-tyrosyl linkage to internal tyrosine residues and these chains act as primers for the elongation reaction catalyzed by glycogen synthase. Capable of transferring glucosyl residues to unbound acceptors such as free oligoglucans or oligoglucan derivatives. This is Glycogenin-2 from Saccharomyces cerevisiae (strain ATCC 204508 / S288c) (Baker's yeast).